Consider the following 445-residue polypeptide: tRNA(Ile)-lysidine synthase (445 aa).

38 to 43 is a binding site for ATP; the sequence is SGGLDS.

Belongs to the tRNA(Ile)-lysidine synthase family.

The protein localises to the cytoplasm. The catalysed reaction is cytidine(34) in tRNA(Ile2) + L-lysine + ATP = lysidine(34) in tRNA(Ile2) + AMP + diphosphate + H(+). Its function is as follows. Ligates lysine onto the cytidine present at position 34 of the AUA codon-specific tRNA(Ile) that contains the anticodon CAU, in an ATP-dependent manner. Cytidine is converted to lysidine, thus changing the amino acid specificity of the tRNA from methionine to isoleucine. The sequence is that of tRNA(Ile)-lysidine synthase from Neisseria gonorrhoeae (strain ATCC 700825 / FA 1090).